We begin with the raw amino-acid sequence, 281 residues long: NAD kinase (281 aa).

Asp66 (proton acceptor) is an active-site residue. Residues 66-67 (DG), 137-138 (ND), Arg148, Arg165, Asp167, and 178-183 (TAYSMS) each bind NAD(+).

This sequence belongs to the NAD kinase family. A divalent metal cation is required as a cofactor.

The protein localises to the cytoplasm. The enzyme catalyses NAD(+) + ATP = ADP + NADP(+) + H(+). Its function is as follows. Involved in the regulation of the intracellular balance of NAD and NADP, and is a key enzyme in the biosynthesis of NADP. Catalyzes specifically the phosphorylation on 2'-hydroxyl of the adenosine moiety of NAD to yield NADP. This Chlorobium phaeovibrioides (strain DSM 265 / 1930) (Prosthecochloris vibrioformis (strain DSM 265)) protein is NAD kinase.